We begin with the raw amino-acid sequence, 135 residues long: uncharacterized protein (135 aa).

This is an uncharacterized protein from Fowl adenovirus A serotype 1 (strain CELO / Phelps) (FAdV-1).